Here is a 420-residue protein sequence, read N- to C-terminus: Tubulin-specific chaperone C (420 aa).

Positions 9–142 (NNNNDEENSK…QIDKSKEKYM (134 aa)) form a coiled coil. The segment covering 31 to 49 (KQRLQSKLEKREISNKEQI) has biased composition (basic and acidic residues). 3 disordered regions span residues 31–52 (KQRL…IDQS), 138–193 (KEKY…NNNK), and 222–257 (EIGN…NNNN). Composition is skewed to low complexity over residues 172-192 (ETFN…NNNN) and 228-257 (INNN…NNNN). The region spanning 216–366 (PPKKEEEIGN…LKQQQQQQQQ (151 aa)) is the C-CAP/cofactor C-like domain.

The protein belongs to the TBCC family. In terms of assembly, supercomplex made of cofactors A to E. Cofactors A and D function by capturing and stabilizing tubulin in a quasi-native conformation. Cofactor E binds to the cofactor D-tubulin complex; interaction with cofactor C then causes the release of tubulin polypeptides that are committed to the native state.

Tubulin-folding protein; involved in the final step of the tubulin folding pathway. This chain is Tubulin-specific chaperone C (tbcc), found in Dictyostelium discoideum (Social amoeba).